Reading from the N-terminus, the 434-residue chain is V-type ATP synthase beta chain (434 aa).

It belongs to the ATPase alpha/beta chains family.

Produces ATP from ADP in the presence of a proton gradient across the membrane. The V-type beta chain is a regulatory subunit. This Borrelia garinii subsp. bavariensis (strain ATCC BAA-2496 / DSM 23469 / PBi) (Borreliella bavariensis) protein is V-type ATP synthase beta chain.